Consider the following 101-residue polypeptide: Ubiquitin-related modifier 1 homolog 1 (101 aa).

Gly-101 is modified (1-thioglycine). Gly-101 participates in a covalent cross-link: Glycyl lysine isopeptide (Gly-Lys) (interchain with K-? in acceptor proteins).

This sequence belongs to the URM1 family. Post-translationally, C-terminal thiocarboxylation occurs in 2 steps, it is first acyl-adenylated (-COAMP) via the hesA/moeB/thiF part of the MOCS3 homolog, then thiocarboxylated (-COSH) via the rhodanese domain of the MOCS3 homolog.

Its subcellular location is the cytoplasm. It functions in the pathway tRNA modification; 5-methoxycarbonylmethyl-2-thiouridine-tRNA biosynthesis. Its function is as follows. Acts as a sulfur carrier required for 2-thiolation of mcm(5)S(2)U at tRNA wobble positions of cytosolic tRNA(Lys), tRNA(Glu) and tRNA(Gln). Serves as sulfur donor in tRNA 2-thiolation reaction by being thiocarboxylated (-COSH) at its C-terminus by MOCS3. The sulfur is then transferred to tRNA to form 2-thiolation of mcm(5)S(2)U. Also acts as a ubiquitin-like protein (UBL) that is covalently conjugated via an isopeptide bond to lysine residues of target proteins. The thiocarboxylated form serves as substrate for conjugation and oxidative stress specifically induces the formation of UBL-protein conjugates. In Arabidopsis thaliana (Mouse-ear cress), this protein is Ubiquitin-related modifier 1 homolog 1.